We begin with the raw amino-acid sequence, 81 residues long: UPF0298 protein SAK_1599 (81 aa).

Belongs to the UPF0298 family.

The protein localises to the cytoplasm. This chain is UPF0298 protein SAK_1599, found in Streptococcus agalactiae serotype Ia (strain ATCC 27591 / A909 / CDC SS700).